We begin with the raw amino-acid sequence, 555 residues long: Dihydroxy-acid dehydratase (555 aa).

D80 is a Mg(2+) binding site. C121 lines the [2Fe-2S] cluster pocket. Residues D122 and K123 each contribute to the Mg(2+) site. K123 bears the N6-carboxylysine mark. [2Fe-2S] cluster is bound at residue C193. E444 is a Mg(2+) binding site. Catalysis depends on S470, which acts as the Proton acceptor.

The protein belongs to the IlvD/Edd family. As to quaternary structure, homodimer. [2Fe-2S] cluster is required as a cofactor. Requires Mg(2+) as cofactor.

It catalyses the reaction (2R)-2,3-dihydroxy-3-methylbutanoate = 3-methyl-2-oxobutanoate + H2O. It carries out the reaction (2R,3R)-2,3-dihydroxy-3-methylpentanoate = (S)-3-methyl-2-oxopentanoate + H2O. It functions in the pathway amino-acid biosynthesis; L-isoleucine biosynthesis; L-isoleucine from 2-oxobutanoate: step 3/4. The protein operates within amino-acid biosynthesis; L-valine biosynthesis; L-valine from pyruvate: step 3/4. Its function is as follows. Functions in the biosynthesis of branched-chain amino acids. Catalyzes the dehydration of (2R,3R)-2,3-dihydroxy-3-methylpentanoate (2,3-dihydroxy-3-methylvalerate) into 2-oxo-3-methylpentanoate (2-oxo-3-methylvalerate) and of (2R)-2,3-dihydroxy-3-methylbutanoate (2,3-dihydroxyisovalerate) into 2-oxo-3-methylbutanoate (2-oxoisovalerate), the penultimate precursor to L-isoleucine and L-valine, respectively. This chain is Dihydroxy-acid dehydratase, found in Aquifex aeolicus (strain VF5).